Consider the following 257-residue polypeptide: MKAHKIFWLNLAAIIIISIVVSGGMFLAMKWEQIHLKDGLKKVLSTYPIKNLETLYEIDGHDNPHYENNDQDTWYIESSYSVVGSDELLKEDRMLLKVDKNTHKITGEYDTTTNDRKDATDSTYKSYPVKVVNNKIVFTKDVKDPALKQKIENNQFLIQSGDLTSILNSNDLKVTHDPTTDYYNLSGKLSNDNPNVKQLKRRYNIPSNASTKVELKGMSDLKGNNHQDQKLYFYFSSPGKNQIIYKESLTYNKLSEH.

A helical membrane pass occupies residues 6 to 26; the sequence is IFWLNLAAIIIISIVVSGGMF.

This sequence belongs to the staphylococcal tandem lipoprotein family.

The protein localises to the cell membrane. This is an uncharacterized protein from Staphylococcus aureus (strain N315).